Here is a 53-residue protein sequence, read N- to C-terminus: MKHVNTLLMQELRLLICELKRLKLSAVSDPDFSQEKIHAELDSLLCKLSRHFD.

Functionally, no function has yet been ascribed to K protein. In Enterobacteria phage phiK (Bacteriophage phi-K), this protein is K protein (K).